A 433-amino-acid chain; its full sequence is Arabinooligosaccharide-binding protein (433 aa).

The signal sequence occupies residues methionine 1 to glycine 21. Cysteine 22 carries the N-palmitoyl cysteine lipid modification. The S-diacylglycerol cysteine moiety is linked to residue cysteine 22.

The protein belongs to the bacterial solute-binding protein 1 family. In terms of assembly, the complex is composed of two ATP-binding proteins (MsmX), two transmembrane proteins (AraP and AraQ) and a solute-binding protein (AraN).

Its subcellular location is the cell membrane. In terms of biological role, part of the ABC transporter complex AraNPQ involved in the uptake of arabinooligosaccharides. Transports alpha-1,5-arabinooligosaccharides, at least up to four L-arabinosyl units. AraN captures the substrate and delivers it to the two transmembrane components. The protein is Arabinooligosaccharide-binding protein of Bacillus subtilis (strain 168).